The following is a 194-amino-acid chain: Peptidyl-tRNA hydrolase (194 aa).

Position 17 (Tyr17) interacts with tRNA. The Proton acceptor role is filled by His22. TRNA-binding residues include Tyr68, Asn70, and Asn116.

Belongs to the PTH family. As to quaternary structure, monomer.

It is found in the cytoplasm. The enzyme catalyses an N-acyl-L-alpha-aminoacyl-tRNA + H2O = an N-acyl-L-amino acid + a tRNA + H(+). Its function is as follows. Hydrolyzes ribosome-free peptidyl-tRNAs (with 1 or more amino acids incorporated), which drop off the ribosome during protein synthesis, or as a result of ribosome stalling. Catalyzes the release of premature peptidyl moieties from peptidyl-tRNA molecules trapped in stalled 50S ribosomal subunits, and thus maintains levels of free tRNAs and 50S ribosomes. The polypeptide is Peptidyl-tRNA hydrolase (Pseudoalteromonas translucida (strain TAC 125)).